The sequence spans 223 residues: Ribonuclease DdI (223 aa).

An N-terminal signal peptide occupies residues 1 to 25 (MRLIAALLSVLLIASTAQSTVTIYE). An intrachain disulfide couples C46 to C51. Residues H63, E113, and H117 contribute to the active site. C78 and C120 are disulfide-bonded. A glycan (N-linked (GlcNAc...) asparagine) is linked at N144. Cystine bridges form between C183–C213 and C194–C205.

Belongs to the RNase T2 family.

The protein localises to the lysosome. It catalyses the reaction a ribonucleotidyl-ribonucleotide-RNA + H2O = a 3'-end 3'-phospho-ribonucleotide-RNA + a 5'-end dephospho-ribonucleoside-RNA + H(+). Inhibited by Cu(2+) and Zn(2+). Its function is as follows. Releases mononucleotides from RNA in the order of 3'-GMP &gt; 3'-UMP &gt; 3'-AMP &gt; 3'-CMP. This Dictyostelium discoideum (Social amoeba) protein is Ribonuclease DdI (ddiA).